Reading from the N-terminus, the 120-residue chain is NAD(P)H-quinone oxidoreductase subunit 3, chloroplastic (120 aa).

The next 3 helical transmembrane spans lie at 9–29, 64–84, and 88–108; these read IFWTFLIIASLIPILAFWISG, MFALVFVVFDVETVFLYPWAM, and VLGVSVFIEAFIFVLILVVGL.

This sequence belongs to the complex I subunit 3 family. In terms of assembly, NDH is composed of at least 16 different subunits, 5 of which are encoded in the nucleus.

Its subcellular location is the plastid. The protein resides in the chloroplast thylakoid membrane. It catalyses the reaction a plastoquinone + NADH + (n+1) H(+)(in) = a plastoquinol + NAD(+) + n H(+)(out). The catalysed reaction is a plastoquinone + NADPH + (n+1) H(+)(in) = a plastoquinol + NADP(+) + n H(+)(out). In terms of biological role, NDH shuttles electrons from NAD(P)H:plastoquinone, via FMN and iron-sulfur (Fe-S) centers, to quinones in the photosynthetic chain and possibly in a chloroplast respiratory chain. The immediate electron acceptor for the enzyme in this species is believed to be plastoquinone. Couples the redox reaction to proton translocation, and thus conserves the redox energy in a proton gradient. The chain is NAD(P)H-quinone oxidoreductase subunit 3, chloroplastic from Agrostis stolonifera (Creeping bentgrass).